A 304-amino-acid polypeptide reads, in one-letter code: N-carbamoyl-D-amino acid hydrolase (304 aa).

A CN hydrolase domain is found at 5–276; the sequence is MILAVGQQGP…DEVITAAVDL (272 aa). Residues Glu47, Lys127, and Cys172 contribute to the active site.

It carries out the reaction an N-carbamoyl-D-amino acid + H2O + 2 H(+) = a D-alpha-amino acid + NH4(+) + CO2. In terms of biological role, the enzyme catalyzes the hydrolysis of N-carbamoyl-D-amino acids to the corresponding which are useful intermediates in the preparation of beta-lactam antibiotics. Industrial production of beta-lactam antibiotics is now being developed using this enzyme. The polypeptide is N-carbamoyl-D-amino acid hydrolase (Agrobacterium sp. (strain KNK712)).